The chain runs to 1659 residues: Intersectin-2 (1659 aa).

Residues 22 to 110 form the EH 1 domain; that stretch reads ERTKHDKQFD…PIMKQPPMFS (89 aa). The region spanning 54 to 89 is the EF-hand 1 domain; sequence LPAPVLAEIWALSDLNKDGKMDQQEFSIAMKLIKLK. Residues D67, N69, D71, K73, and E78 each coordinate Ca(2+). S110, S211, and S231 each carry phosphoserine. Residues 220 to 231 are compositionally biased toward low complexity; that stretch reads STSSTASLSGNS. The disordered stretch occupies residues 220–242; it reads STSSTASLSGNSPKTGTSEWAVP. Positions 245 to 334 constitute an EH 2 domain; that stretch reads SRLKYRQKFN…PELVPPSFRG (90 aa). Positions 278 to 313 constitute an EF-hand 2 domain; the sequence is LSQTQLATIWTLADIDGDGQLKAEEFILAMHLTDMA. Residues 335–382 are disordered; that stretch reads GKQVDSVNGTLPSYQKTQEEEPQKKLPVTFEDKRKANYERGNMELEKR. Positions 339–350 are enriched in polar residues; sequence DSVNGTLPSYQK. Basic and acidic residues predominate over residues 351–382; the sequence is TQEEEPQKKLPVTFEDKRKANYERGNMELEKR. The stretch at 365 to 717 forms a coiled coil; it reads EDKRKANYER…KAEAKQSETA (353 aa). Position 554 is a phosphotyrosine (Y554). Residue T574 is modified to Phosphothreonine. The span at 689 to 713 shows a compositional bias: basic and acidic residues; that stretch reads KQKRLQEEKSQDKTQEEERKAEAKQ. The tract at residues 689 to 715 is disordered; that stretch reads KQKRLQEEKSQDKTQEEERKAEAKQSE. The 62-residue stretch at 718 to 779 folds into the SH3 1 domain; that stretch reads SALVNYRALY…PCNYVEKVLS (62 aa). T836 is subject to Phosphothreonine. Phosphoserine is present on residues S838 and S843. Residues 852–910 form the SH3 2 domain; sequence VENLKAQALCSWTAKKENHLNFSKHDVITVLEQQENWWFGEVHGGRGWFPKSYVKLIPG. Y922 carries the phosphotyrosine modification. SH3 domains are found at residues 942–1000, 1014–1078, and 1088–1147; these read PVGE…PKDQ, KKPE…LLGP, and HAVC…MTTD. Residues 1170 to 1357 enclose the DH domain; that stretch reads KRQGYIHELI…EELCSQVNEG (188 aa). A PH domain is found at 1396-1506; the sequence is KLLHSGKLYK…WVQKIKGASE (111 aa). A C2 domain is found at 1514–1630; that stretch reads KKREKAYQAR…RTEQESKGPT (117 aa). Residues D1602, S1605, and D1608 each coordinate Ca(2+).

As to quaternary structure, belongs to a complex that may contain multimers of ITSN1, ITSN2 and EPS15, and different partners according to the step in the endocytic process. Interacts with ADAM15. Interacts with FASLG. Interacts with ANKRD54. Interacts with FCHO2. It depends on Ca(2+) as a cofactor. In terms of tissue distribution, widely expressed in adult tissues.

It is found in the cytoplasm. Its function is as follows. Adapter protein that may provide indirect link between the endocytic membrane traffic and the actin assembly machinery. May regulate the formation of clathrin-coated vesicles (CCPs). Seems to be involved in CCPs maturation including invagination or budding. Involved in endocytosis of integrin beta-1 (ITGB1) and transferrin receptor (TFR). Plays a role in dendrite formation by melanocytes. The polypeptide is Intersectin-2 (Itsn2) (Mus musculus (Mouse)).